The sequence spans 453 residues: Flavonol-3-O-rhamnosyltransferase (453 aa).

The active-site Proton acceptor is histidine 24. Histidine 24 is an an anthocyanidin binding site. Catalysis depends on aspartate 119, which acts as the Charge relay. Residue histidine 150 participates in an anthocyanidin binding. 6 residues coordinate UDP-beta-L-rhamnose: threonine 280, alanine 333, histidine 350, asparagine 354, serine 355, and glutamate 358. An an anthocyanidin-binding site is contributed by alanine 373.

Belongs to the UDP-glycosyltransferase family. Expressed in leaves, flowers, siliques, and stems. Expressed in the shoot apex.

It carries out the reaction kaempferol + UDP-beta-L-rhamnose = kaempferol 3-O-alpha-L-rhamnoside + UDP + H(+). The enzyme catalyses UDP-beta-L-rhamnose + quercetin = quercitrin + UDP + H(+). It participates in flavonoid metabolism. In terms of biological role, flavonol 3-O-rhamnosyltransferase that catalyzes the transfer of rhamnose from UDP-rhamnose to the 3-OH position of kaempferol and quercetin. Possesses low quercetin 3-O-glucosyltransferase activity in vitro. This chain is Flavonol-3-O-rhamnosyltransferase, found in Arabidopsis thaliana (Mouse-ear cress).